Consider the following 624-residue polypeptide: Aeromonas extracellular serine protease (624 aa).

The signal sequence occupies residues 1 to 24 (MKQTSLALAITALLSTLPSALVQA). Cys28 and Cys48 are joined by a disulfide. Ca(2+) is bound at residue Asn53. Residues 59-421 (QWYLLNSGQD…GKVRDVKGLE (363 aa)) enclose the Peptidase S8 domain. Asp102 acts as the Charge relay system in catalysis. Asp111 provides a ligand contact to Ca(2+). The disordered stretch occupies residues 116–140 (VRPGSKNVVTGSDDPTPTDPDTAHG). His139 acts as the Charge relay system in catalysis. The Ca(2+) site is built by Val150, Asn152, Ile154, Thr156, Asp321, Leu322, Gly324, Met327, Asn330, and Cys350. A disulfide bridge links Cys325 with Cys350. Residue Ser360 is the Charge relay system of the active site. A P/Homo B domain is found at 456 to 622 (LPPLVQLPWQ…SLRVLGHDAN (167 aa)). The Ca(2+) site is built by Asp478, Asp512, Asp577, Ala579, Asn602, and Asn603.

This sequence belongs to the peptidase S8 family. Furin subfamily. In terms of assembly, forms a complex with the chaperone ORF2 in the periplasm. After translocation of the ASP-ORF2 complex from the periplasm to the extracellular space, the complex is dissociated in a pH-dependent manner. Ca(2+) is required as a cofactor.

Its subcellular location is the periplasm. The protein resides in the secreted. It catalyses the reaction Cleavage of -Lys-Lys-|-Xaa and -Lys-Arg-|-Xaa bonds.. With respect to regulation, folding, maturation and production of the active form of the protease by the cell requires a protein (ORF2), encoded just downstream of asp, which acts as a chaperone. Formation of a complex with ORF2 in the periplasm also inactivates the protease activity and likely protects ASP from intrinsic proteases. In vitro, protease activity is inhibited by human alpha-2-macroglobulin, suggesting that this inhibitor can impede ASP virulence activities in A.sobria infection sites. However, slow ASP inhibition by alpha-2-macroglobulin in plasma may indicate insufficient ASP control in vivo. Activity is inhibited by serine protease inhibitors such as 4-(2-aminoethyl)-benzenesulfonyl fluoride (AEBSF) and diisopropyl fluorophosphate (DFP). Not inhibited by metallo-protease inhibitors and cysteine protease inhibitors. The treatment with reagents to modify sulfhydryl group do not reduce the activity. Its function is as follows. Exhibits serine protease activity. Preferentially cleaves the peptide bond following two basic residues, one of which is Lys, but does not recognize the bond following a single basic residue. Probable potent virulence factor that cleaves various host plasma proteins, including prekallikrein, prothrombin and fibrinogen. ASP induces vascular leakage and reduction in blood pressure by activating the host plasma kallikrein/kinin system. It affects the host coagulation system during infection through activation of prothrombin to alpha-thrombin and degradation of fibrinogen, which impairs plasma clottability. It also hydrolyzes the complement component C5, releasing the C5a anaphylatoxin, which causes the formation of pus and edema. In addition, degrades its external chaperone ORF2 after the secretion of the ASP-ORF2 complex. The protein is Aeromonas extracellular serine protease of Aeromonas sobria.